The primary structure comprises 130 residues: MKDEVVVVTGLAAMEPLIVHRMIVERTAAGTMIIETWTTAHTHESMAVRRASMSMTTHLKSKVQRIPTRPPRAPRLSVGGGGGTGTVPLARQASPETATIGTRTIGPSKGRRRRRRMRRRRRRRPVTSSC.

The tract at residues 61 to 130 (SKVQRIPTRP…RRRRPVTSSC (70 aa)) is disordered. Over residues 109 to 130 (KGRRRRRRMRRRRRRRPVTSSC) the composition is skewed to basic residues.

In terms of assembly, interacts with 60S ribosome assembly factors GTPBP4 and MRTO4.

It is found in the nucleus. The protein resides in the nucleolus. Functionally, acts as a late-stage inhibitor of pre-60S ribosome assembly by preventing pre-60S ribosome export from nucleus. This Mus musculus (Mouse) protein is Ribosome biogenesis inhibitor MINAS-60.